Reading from the N-terminus, the 513-residue chain is Laccase (513 aa).

Plastocyanin-like domains follow at residues 45–81 (PTRL…STHF), 101–178 (KTVV…HDPK), 240–318 (WPYL…ILAN), and 378–509 (QDEY…MDIT). Residues H105, H107, H153, and H155 each coordinate Cu cation. Residues H419, H422, H424, H491, C492, H493, H497, and M502 each coordinate Cu cation.

Belongs to the multicopper oxidase family. In terms of assembly, monomer. Cu(2+) is required as a cofactor.

It localises to the spore coat. The enzyme catalyses 4 hydroquinone + O2 = 4 benzosemiquinone + 2 H2O. The catalysed reaction is 2 (4Z,15Z)-bilirubin IXalpha + O2 = 2 biliverdin IXalpha + 2 H2O. Its activity is regulated as follows. Inhibited by azide. Its function is as follows. Multicopper oxidase that catalyzes the oxidation of a variety of substrates, including phenolic and non-phenolic compounds. Substrates include syringaldazine (SGZ), 2,6-dimethoxyphenol (2,6-DMP) and the non-phenolic compound 2,2'-azino-bis(3-ethylbenzothiazoline-6-sulfonic acid) (ABTS). Has no tyrosinase activity. Is implicated in the biosynthesis of a brownish pigment that characterizes sporulating colonies of B.subtilis, and which appears to be a melanin-like product and to confer protection against UV light. Functionally, in vitro, also shows strong bilirubin oxidase (BOD) activity, and can catalyze the oxidation of free bilirubin (UB), direct bilirubin (conjugated with glucuronic acid, DB) and ditaurobilirubin. This Bacillus subtilis (strain 168) protein is Laccase.